Here is a 199-residue protein sequence, read N- to C-terminus: Probable GTP-binding protein EngB (199 aa).

Residues 28–199 form the EngB-type G domain; that stretch reads DLPEIALAGR…DSWDAILEQV (172 aa). Residues 36–43, 63–67, 81–84, 148–151, and 180–182 each bind GTP; these read GRSNVGKS, GKTQL, DVPG, TKAD, and FSS. Mg(2+)-binding residues include serine 43 and threonine 65.

Belongs to the TRAFAC class TrmE-Era-EngA-EngB-Septin-like GTPase superfamily. EngB GTPase family. Requires Mg(2+) as cofactor.

Functionally, necessary for normal cell division and for the maintenance of normal septation. The sequence is that of Probable GTP-binding protein EngB from Streptococcus pyogenes serotype M49 (strain NZ131).